The following is a 566-amino-acid chain: Intracellular exo-alpha-(1-&gt;5)-L-arabinofuranosidase (566 aa).

Polar residues predominate over residues M1–T12. Positions M1–N39 are disordered. Residues S20–S32 show a composition bias toward low complexity. Residues E69, N114, and N214 each coordinate alpha-L-arabinofuranose. E215 (proton donor/acceptor) is an active-site residue. Alpha-L-arabinofuranose is bound by residues Y286, E340, and Q409. The active-site Nucleophile is E340.

Belongs to the glycosyl hydrolase 51 family. In terms of assembly, homohexamer; trimer of dimers.

It localises to the cytoplasm. The enzyme catalyses Hydrolysis of terminal non-reducing alpha-L-arabinofuranoside residues in alpha-L-arabinosides.. The protein operates within glycan metabolism; L-arabinan degradation. Its activity is regulated as follows. Completely inhibited by Hg(2+) and Cu(2+) ions, whereas 1 mM Zn(2+) inhibited activity by 51%. Its function is as follows. Involved in the degradation of arabinan and is a key enzyme in the complete degradation of the plant cell wall. Catalyzes the cleavage of terminal alpha-(1-&gt;5)-arabinofuranosyl bonds in different hemicellulosic homopolysaccharides (branched and debranched arabinans). It is active with sugar beet arabinan and wheat arabinoxylan. It also exhibited activity against alpha-(1-&gt;5)-linked arabinobiose, arabinotriose, arabinotetraose, and arabinopentaose. The chain is Intracellular exo-alpha-(1-&gt;5)-L-arabinofuranosidase (abfB) from Bifidobacterium longum.